We begin with the raw amino-acid sequence, 358 residues long: Aminomethyltransferase (358 aa).

This sequence belongs to the GcvT family. In terms of assembly, the glycine cleavage system is composed of four proteins: P, T, L and H.

It catalyses the reaction N(6)-[(R)-S(8)-aminomethyldihydrolipoyl]-L-lysyl-[protein] + (6S)-5,6,7,8-tetrahydrofolate = N(6)-[(R)-dihydrolipoyl]-L-lysyl-[protein] + (6R)-5,10-methylene-5,6,7,8-tetrahydrofolate + NH4(+). Its function is as follows. The glycine cleavage system catalyzes the degradation of glycine. The sequence is that of Aminomethyltransferase from Francisella philomiragia subsp. philomiragia (strain ATCC 25017 / CCUG 19701 / FSC 153 / O#319-036).